A 488-amino-acid chain; its full sequence is MMPQLRDSGNHSTAPLDGRTRGEVDAFIRIFGIETEYGVSVTGADAPCDAGQTAMMMFQPIVAQARSTNTYIENGSRLYLDVGSHPEYATAEARDPMDALALDAAGELVMRDLAMDTQHRLREGHGRRAIVHVFKNNADSAGHSFGCHENYLVRRFVPLETIEHELLPFLITRQIFTGAGRVGGQGFQITQRADFLDEAVSSATTRSRPMVNTRDEPHADPDAFRRLHVIIGDSNRSQWATMMKLATTHLVLCVIEQAGREGRESGFARFAFADPGAANHAVSRDASGVGAVFDMADGDVIRGGAVAVQERYLAAVERFVEDHPEVGASLPRTDVHDVIAQWHEALEAFRSGDVDALADRVDWVCKKRLFDALQARTGHLPASRLEQLDMDYHDVANGTVYASLCRRGGMRTLLGRDAADRAVHMPPDDTRAALRGRFVREAKAKGARYSCDWTRLTLMSPHHSEMVLLDPFDFEESERFRQMMDMLA.

A Mg(2+)-binding site is contributed by glutamate 34. Arginine 77 contacts ATP. Tyrosine 79 serves as a coordination point for Mg(2+). Residue aspartate 81 is the Proton acceptor of the active site. Glutamate 87 is a binding site for Mg(2+). The ATP site is built by threonine 90 and tryptophan 453.

Belongs to the Pup ligase/Pup deamidase family. Pup-conjugating enzyme subfamily.

It carries out the reaction ATP + [prokaryotic ubiquitin-like protein]-L-glutamate + [protein]-L-lysine = ADP + phosphate + N(6)-([prokaryotic ubiquitin-like protein]-gamma-L-glutamyl)-[protein]-L-lysine.. Its pathway is protein degradation; proteasomal Pup-dependent pathway. The protein operates within protein modification; protein pupylation. Functionally, catalyzes the covalent attachment of the prokaryotic ubiquitin-like protein modifier Pup to the proteasomal substrate proteins, thereby targeting them for proteasomal degradation. This tagging system is termed pupylation. The ligation reaction involves the side-chain carboxylate of the C-terminal glutamate of Pup and the side-chain amino group of a substrate lysine. This Bifidobacterium dentium (strain ATCC 27534 / DSM 20436 / JCM 1195 / Bd1) protein is Pup--protein ligase.